The sequence spans 626 residues: Putative L-type lectin-domain containing receptor kinase V.8 (626 aa).

The first 21 residues, M1–S21, serve as a signal peptide directing secretion. The interval T22–S212 is legume-lectin like. The Extracellular portion of the chain corresponds to T22–K245. N28, N59, N112, and N162 each carry an N-linked (GlcNAc...) asparagine glycan. A helical membrane pass occupies residues I246 to F266. Topologically, residues V267–R626 are cytoplasmic. Positions F303–L562 constitute a Protein kinase domain. Residues L309 to V317 and K332 contribute to the ATP site. Residue D429 is the Proton acceptor of the active site.

This sequence in the C-terminal section; belongs to the protein kinase superfamily. Ser/Thr protein kinase family. It in the N-terminal section; belongs to the leguminous lectin family.

It is found in the cell membrane. The enzyme catalyses L-seryl-[protein] + ATP = O-phospho-L-seryl-[protein] + ADP + H(+). The catalysed reaction is L-threonyl-[protein] + ATP = O-phospho-L-threonyl-[protein] + ADP + H(+). The protein is Putative L-type lectin-domain containing receptor kinase V.8 (LECRK58) of Arabidopsis thaliana (Mouse-ear cress).